We begin with the raw amino-acid sequence, 295 residues long: Diaminopimelate epimerase (295 aa).

Positions 13, 46, and 66 each coordinate substrate. Residue Cys-75 is the Proton donor of the active site. Substrate is bound by residues 76–77, Asn-162, Asn-195, and 213–214; these read GN and ER. Residue Cys-222 is the Proton acceptor of the active site. 223–224 is a binding site for substrate; the sequence is GT.

This sequence belongs to the diaminopimelate epimerase family. In terms of assembly, homodimer.

It is found in the cytoplasm. The catalysed reaction is (2S,6S)-2,6-diaminopimelate = meso-2,6-diaminopimelate. It participates in amino-acid biosynthesis; L-lysine biosynthesis via DAP pathway; DL-2,6-diaminopimelate from LL-2,6-diaminopimelate: step 1/1. Catalyzes the stereoinversion of LL-2,6-diaminopimelate (L,L-DAP) to meso-diaminopimelate (meso-DAP), a precursor of L-lysine and an essential component of the bacterial peptidoglycan. The polypeptide is Diaminopimelate epimerase (Psychrobacter cryohalolentis (strain ATCC BAA-1226 / DSM 17306 / VKM B-2378 / K5)).